The following is a 155-amino-acid chain: D-aminoacyl-tRNA deacylase (155 aa).

A Gly-cisPro motif, important for rejection of L-amino acids motif is present at residues 137–138 (GP).

The protein belongs to the DTD family. In terms of assembly, homodimer.

The protein localises to the cytoplasm. It carries out the reaction glycyl-tRNA(Ala) + H2O = tRNA(Ala) + glycine + H(+). It catalyses the reaction a D-aminoacyl-tRNA + H2O = a tRNA + a D-alpha-amino acid + H(+). In terms of biological role, an aminoacyl-tRNA editing enzyme that deacylates mischarged D-aminoacyl-tRNAs. Also deacylates mischarged glycyl-tRNA(Ala), protecting cells against glycine mischarging by AlaRS. Acts via tRNA-based rather than protein-based catalysis; rejects L-amino acids rather than detecting D-amino acids in the active site. By recycling D-aminoacyl-tRNA to D-amino acids and free tRNA molecules, this enzyme counteracts the toxicity associated with the formation of D-aminoacyl-tRNA entities in vivo and helps enforce protein L-homochirality. This chain is D-aminoacyl-tRNA deacylase, found in Paracidovorax citrulli (strain AAC00-1) (Acidovorax citrulli).